A 364-amino-acid chain; its full sequence is DNA replication and repair protein RecF (364 aa).

30-37 (GNNGQGKT) contacts ATP.

The protein belongs to the RecF family.

It is found in the cytoplasm. Functionally, the RecF protein is involved in DNA metabolism; it is required for DNA replication and normal SOS inducibility. RecF binds preferentially to single-stranded, linear DNA. It also seems to bind ATP. The protein is DNA replication and repair protein RecF of Geobacter sp. (strain M21).